Consider the following 145-residue polypeptide: UPF0201 protein LS215_1276 (145 aa).

This sequence belongs to the UPF0201 family.

The protein is UPF0201 protein LS215_1276 of Saccharolobus islandicus (strain L.S.2.15 / Lassen #1) (Sulfolobus islandicus).